The chain runs to 247 residues: 3-deoxy-manno-octulosonate cytidylyltransferase (247 aa).

It belongs to the KdsB family.

It is found in the cytoplasm. The enzyme catalyses 3-deoxy-alpha-D-manno-oct-2-ulosonate + CTP = CMP-3-deoxy-beta-D-manno-octulosonate + diphosphate. Its pathway is nucleotide-sugar biosynthesis; CMP-3-deoxy-D-manno-octulosonate biosynthesis; CMP-3-deoxy-D-manno-octulosonate from 3-deoxy-D-manno-octulosonate and CTP: step 1/1. The protein operates within bacterial outer membrane biogenesis; lipopolysaccharide biosynthesis. Its function is as follows. Activates KDO (a required 8-carbon sugar) for incorporation into bacterial lipopolysaccharide in Gram-negative bacteria. The protein is 3-deoxy-manno-octulosonate cytidylyltransferase of Methylorubrum extorquens (strain PA1) (Methylobacterium extorquens).